Reading from the N-terminus, the 109-residue chain is uncharacterized protein (109 aa).

This is an uncharacterized protein from Bacillus subtilis (strain 168).